A 418-amino-acid polypeptide reads, in one-letter code: Serine hydroxymethyltransferase (418 aa).

(6S)-5,6,7,8-tetrahydrofolate-binding positions include Leu-121 and 125 to 127; that span reads GHL. Lys-230 carries the post-translational modification N6-(pyridoxal phosphate)lysine. A (6S)-5,6,7,8-tetrahydrofolate-binding site is contributed by 355-357; that stretch reads SPF.

This sequence belongs to the SHMT family. In terms of assembly, homodimer. Requires pyridoxal 5'-phosphate as cofactor.

The protein localises to the cytoplasm. The catalysed reaction is (6R)-5,10-methylene-5,6,7,8-tetrahydrofolate + glycine + H2O = (6S)-5,6,7,8-tetrahydrofolate + L-serine. The protein operates within one-carbon metabolism; tetrahydrofolate interconversion. It participates in amino-acid biosynthesis; glycine biosynthesis; glycine from L-serine: step 1/1. In terms of biological role, catalyzes the reversible interconversion of serine and glycine with tetrahydrofolate (THF) serving as the one-carbon carrier. This reaction serves as the major source of one-carbon groups required for the biosynthesis of purines, thymidylate, methionine, and other important biomolecules. Also exhibits THF-independent aldolase activity toward beta-hydroxyamino acids, producing glycine and aldehydes, via a retro-aldol mechanism. The polypeptide is Serine hydroxymethyltransferase (Streptococcus pyogenes serotype M18 (strain MGAS8232)).